We begin with the raw amino-acid sequence, 94 residues long: Small ribosomal subunit protein uS19 (94 aa).

It belongs to the universal ribosomal protein uS19 family.

Its function is as follows. Protein S19 forms a complex with S13 that binds strongly to the 16S ribosomal RNA. The chain is Small ribosomal subunit protein uS19 from Hamiltonella defensa subsp. Acyrthosiphon pisum (strain 5AT).